The chain runs to 59 residues: Potassium channel toxin alpha-KTx 3.5 (59 aa).

The N-terminal stretch at 1-22 is a signal peptide; sequence MKVFSAVLIILFVCSMIIGINA. Cystine bridges form between Cys-29-Cys-49, Cys-35-Cys-54, and Cys-39-Cys-56. An interaction with Ca(2+)-activated K(+) channels region spans residues 47 to 54; the sequence is GKCMNGKC.

The protein belongs to the short scorpion toxin superfamily. Potassium channel inhibitor family. Alpha-KTx 03 subfamily. Expressed by the venom gland.

The protein resides in the secreted. Its function is as follows. Has also been shown to inhibit with high potency Kv1.3/KCNA3 and with low potency Kv1.1/KCNA1 and Kv1.2/KCNA2 voltage-gated potassium channels. Also binds and inhibits the molluscan calcium-activated potassium channels KCa (Kd=135 nM). This Androctonus australis (Sahara scorpion) protein is Potassium channel toxin alpha-KTx 3.5 (KTX2).